Consider the following 1410-residue polypeptide: non-specific serine/threonine protein kinase (1410 aa).

The 273-residue stretch at 27–299 folds into the Protein kinase domain; sequence THYVSQLNNS…LLEKYRTIYF (273 aa). ATP contacts are provided by residues 33–41 and lysine 54; that span reads LNNSRFLKT. Aspartate 147 (proton acceptor) is an active-site residue. HEAT repeat units lie at residues 441 to 478, 485 to 525, 556 to 594, 596 to 633, and 635 to 672; these read TKLD…EVKH, NIFV…KANL, RKLQ…YFGR, KTND…LLGP, and TMEQ…TRFV. 3 WD repeats span residues 1037–1076, 1187–1226, and 1230–1273; these read FDGT…NEKS, ADYG…QIRA, and GESL…CKHV.

Belongs to the protein kinase superfamily. Ser/Thr protein kinase family. In terms of assembly, component of the autophagy-specific VPS34 PI3-kinase complex I composed of VPS15, VPS30, VPS34, ATG14 and ATG38; and of the VPS34 PI3-kinase complex II composed of VPS15, VPS30, VPS34 and VPS38. In terms of processing, autophosphorylated.

Its subcellular location is the golgi apparatus. The protein resides in the trans-Golgi network membrane. It is found in the endosome membrane. It carries out the reaction L-seryl-[protein] + ATP = O-phospho-L-seryl-[protein] + ADP + H(+). It catalyses the reaction L-threonyl-[protein] + ATP = O-phospho-L-threonyl-[protein] + ADP + H(+). Serine/threonine-protein kinase that plays a role in signaling in modulation of host immune response, intracellular survival and virulence. Required for impediment of phagosomal maturation in THP-1 macrophages. Regulatory subunit of the autophagy-specific VPS34 PI3-kinase complex I essential to recruit the ATG8-phosphatidylinositol conjugate and the ATG12-ATG5 conjugate to the pre-autophagosomal structure. Within the PS34 PI3-kinase complex I, VPS15-mediated phosphorylation of VPS34 may be required for recruiting VPS34 to the membrane but not for activation of its PI3K activity. Is also involved in endosome-to-Golgi retrograde transport as part of the VPS34 PI3-kinase complex II. This second complex is required for the endosome-to-Golgi retrieval of PEP1 and KEX2, and the recruitment of VPS5 and VPS7, two components of the retromer complex, to endosomal membranes (probably through the synthesis of a specific pool of phosphatidylinositol 3-phosphate recruiting the retromer to the endosomes). By regulating VPS34 kinase activity, VPS15 appears to be essential for the efficient delivery of soluble hydrolases to the yeast vacuole. This chain is non-specific serine/threonine protein kinase, found in Candida glabrata (strain ATCC 2001 / BCRC 20586 / JCM 3761 / NBRC 0622 / NRRL Y-65 / CBS 138) (Yeast).